The sequence spans 345 residues: Heat-inducible transcription repressor HrcA (345 aa).

It belongs to the HrcA family.

Negative regulator of class I heat shock genes (grpE-dnaK-dnaJ and groELS operons). Prevents heat-shock induction of these operons. The chain is Heat-inducible transcription repressor HrcA from Dehalococcoides mccartyi (strain ATCC BAA-2100 / JCM 16839 / KCTC 5957 / BAV1).